Consider the following 717-residue polypeptide: Delta-1-pyrroline-5-carboxylate synthase (717 aa).

A glutamate 5-kinase region spans residues 1-296; the sequence is MDAVDSTRAF…WAPVGDVGAR (296 aa). 3 residues coordinate substrate: Ser60, Asp157, and Asn176. ATP contacts are provided by residues 196–197 and 236–242; these read SD and RGGMTAK. Positions 297 to 717 are gamma-glutamyl phosphate reductase; sequence DMAVAARESS…YTHKDLTSHA (421 aa).

In the N-terminal section; belongs to the glutamate 5-kinase family. This sequence in the C-terminal section; belongs to the gamma-glutamyl phosphate reductase family. As to expression, expressed at high levels in leaves and is inducible in roots subjected to salt stress.

The catalysed reaction is L-glutamate + ATP = L-glutamyl 5-phosphate + ADP. The enzyme catalyses L-glutamate 5-semialdehyde + phosphate + NADP(+) = L-glutamyl 5-phosphate + NADPH + H(+). Its pathway is amino-acid biosynthesis; L-proline biosynthesis; L-glutamate 5-semialdehyde from L-glutamate: step 1/2. It participates in amino-acid biosynthesis; L-proline biosynthesis; L-glutamate 5-semialdehyde from L-glutamate: step 2/2. With respect to regulation, feedback regulated by proline. P5CS plays a key role in proline biosynthesis, leading to osmoregulation in plants. This Actinidia deliciosa (Kiwi) protein is Delta-1-pyrroline-5-carboxylate synthase.